The primary structure comprises 266 residues: Glycine--tRNA ligase beta subunit (266 aa).

This sequence belongs to the class-II aminoacyl-tRNA synthetase family. In terms of assembly, tetramer of two alpha and two beta subunits.

It is found in the cytoplasm. It carries out the reaction tRNA(Gly) + glycine + ATP = glycyl-tRNA(Gly) + AMP + diphosphate. In Moraxella catarrhalis (Branhamella catarrhalis), this protein is Glycine--tRNA ligase beta subunit (glyS).